The primary structure comprises 442 residues: HTH-type transcriptional regulator NorG (442 aa).

The HTH gntR-type domain occupies Lys-2 to Tyr-46. Positions His-6–Glu-25 form a DNA-binding region, H-T-H motif. The residue at position 288 (Lys-288) is an N6-(pyridoxal phosphate)lysine.

The protein in the C-terminal section; belongs to the class-I pyridoxal-phosphate-dependent aminotransferase family. It depends on pyridoxal 5'-phosphate as a cofactor.

In terms of biological role, positively regulates the expression of the NorB efflux pump and negatively regulates the expression of the AbcA efflux pump. Binds specifically to the promoters of norA, norB and norC and abcA genes. Could also have an aminotransferase activity. In Staphylococcus aureus (strain USA300), this protein is HTH-type transcriptional regulator NorG (norG).